The sequence spans 674 residues: Multifunctional alkene reductase/demethylase OYE (674 aa).

FMN contacts are provided by Gly62 and Gln105. The active-site Proton donor is the His175. FMN is bound by residues Arg223 and Lys299. 3 residues coordinate [4Fe-4S] cluster: Cys345, Cys351, and Cys358. FAD is bound by residues Ala391, Gln418, and Arg428.

This sequence in the N-terminal section; belongs to the NADH:flavin oxidoreductase/NADH oxidase family. [4Fe-4S] cluster is required as a cofactor. The cofactor is FAD. Requires FMN as cofactor.

It catalyses the reaction 3-phenylpropanoate + NAD(+) = (E)-cinnamate + NADH + H(+). It carries out the reaction N-methyl-L-proline + NAD(+) + H2O = L-proline + formaldehyde + NADH + H(+). A member of the 2-enoate reductase subfamily of old yellow enzymes (OYE) able to reduce alpha/beta alkenes near electron-withdrawing groups as well as perform oxidative demethylation chemistry. Prefers NADH over NADPH as cosubstrate. May play a role in osmotic stress response in situ. The polypeptide is Multifunctional alkene reductase/demethylase OYE (Caballeronia cordobensis (Burkholderia cordobensis)).